An 897-amino-acid polypeptide reads, in one-letter code: Ubiquitin carboxyl-terminal hydrolase 33 (897 aa).

A UBP-type zinc finger spans residues 7 to 110 (NDCPHLECVG…KQLPNAAKAV (104 aa)). C9, H11, C31, C34, C44, C49, C54, H61, H65, H71, C84, and C87 together coordinate Zn(2+). Residues 156–670 (TGLKNIGNTC…EAYVLFYKKS (515 aa)) form the USP domain. C165 functions as the Nucleophile in the catalytic mechanism. 2 disordered regions span residues 261–308 (LIPE…GPRV) and 343–420 (GSHG…HKKV). Residues 287–297 (DDFQSCESCGS) are compositionally biased toward polar residues. Basic and acidic residues-rich tracts occupy residues 299–308 (DRADNEGPRV) and 344–353 (SHGDLDKDVD). A compositionally biased stretch (polar residues) spans 355-396 (TSDSRPIISSQGAIKAQGRTSDSEIQVSSTVRPQSPTGNEGI). The span at 398 to 411 (SRLSSSPPKSSAWP) shows a compositional bias: low complexity. Catalysis depends on H628, which acts as the Proton acceptor. 2 DUSP domains span residues 672-765 (DETQ…LYVC) and 773-876 (EKLE…RPSV). Residues 875 to 884 (SVSHQESETS) show a composition bias toward low complexity. Positions 875 to 897 (SVSHQESETSQSEEKIEVETRTV) are disordered. The segment covering 886–897 (SEEKIEVETRTV) has biased composition (basic and acidic residues).

It belongs to the peptidase C19 family. USP20/USP33 subfamily.

Its subcellular location is the cytoplasm. It is found in the perinuclear region. It localises to the cytoskeleton. The protein resides in the microtubule organizing center. The protein localises to the centrosome. It carries out the reaction Thiol-dependent hydrolysis of ester, thioester, amide, peptide and isopeptide bonds formed by the C-terminal Gly of ubiquitin (a 76-residue protein attached to proteins as an intracellular targeting signal).. Functionally, deubiquitinating enzyme involved in various processes such as centrosome duplication, cellular migration and beta-2 adrenergic receptor/ADRB2 recycling. Involved in regulation of centrosome duplication by mediating deubiquitination of ccp110 in S and G2/M phase, leading to stabilize ccp110 during the period which centrioles duplicate and elongate. Involved in cell migration via its interaction with intracellular domain of robo1, leading to regulate the Slit signaling. Plays a role in commissural axon guidance cross the ventral midline of the neural tube in a Slit-dependent manner, possibly by mediating the deubiquitination of robo1. Acts as a regulator of G-protein coupled receptor (GPCR) signaling by mediating the deubiquitination of beta-arrestins (arrb1 and arrb2) and beta-2 adrenergic receptor (adrb2). Deubiquitinates dio2, thereby regulating thyroid hormone regulation. Mediates deubiquitination of both 'Lys-48'- and 'Lys-63'-linked polyubiquitin chains. In Danio rerio (Zebrafish), this protein is Ubiquitin carboxyl-terminal hydrolase 33 (usp33).